The following is a 1333-amino-acid chain: NPC1-like intracellular cholesterol transporter 1 (1333 aa).

The first 20 residues, Met-1–Gly-20, serve as a signal peptide directing secretion. Topologically, residues Glu-21–Trp-284 are extracellular. 9 cysteine pairs are disulfide-bonded: Cys-32-Cys-90, Cys-38-Cys-56, Cys-77-Cys-125, Cys-91-Cys-129, Cys-113-Cys-254, Cys-116-Cys-172, Cys-189-Cys-197, Cys-243-Cys-259, and Cys-256-Cys-263. Residues Leu-285 to Leu-305 form a helical membrane-spanning segment. Residues Arg-306–Pro-352 lie on the Cytoplasmic side of the membrane. A helical transmembrane segment spans residues Leu-353–Ile-373. Residues Glu-374 to Asp-632 lie on the Extracellular side of the membrane. Disulfide bonds link Cys-471–Cys-485 and Cys-525–Cys-542. The 166-residue stretch at Asp-632–Leu-797 folds into the SSD domain. A helical transmembrane segment spans residues Leu-633 to Ser-653. Residues Tyr-654 to Lys-665 are Cytoplasmic-facing. Residues Ala-666–Phe-686 form a helical membrane-spanning segment. Residues Tyr-687–Leu-696 lie on the Extracellular side of the membrane. The chain crosses the membrane as a helical span at residues Val-697–Phe-717. Residues Val-718 to Ser-742 lie on the Cytoplasmic side of the membrane. The chain crosses the membrane as a helical span at residues Val-743–Leu-763. The Extracellular portion of the chain corresponds to Thr-764–Ser-776. A helical membrane pass occupies residues Gly-777–Leu-797. Residues Asp-798–Arg-846 lie on the Cytoplasmic side of the membrane. The chain crosses the membrane as a helical span at residues Pro-847 to Ile-867. Residues Ser-868–Gly-1113 lie on the Extracellular side of the membrane. Intrachain disulfides connect Cys-920–Cys-925, Cys-967–Cys-1025, and Cys-981–Cys-990. The helical transmembrane segment at Ile-1114–Leu-1134 threads the bilayer. Over Asp-1135 to Asn-1142 the chain is Cytoplasmic. A helical membrane pass occupies residues Leu-1143 to Ser-1163. Residues Tyr-1164–Asn-1165 are Extracellular-facing. Residues Ala-1166–Ile-1186 form a helical membrane-spanning segment. The Cytoplasmic portion of the chain corresponds to Thr-1187 to Thr-1206. Residues Ile-1207 to Ile-1227 traverse the membrane as a helical segment. Over Leu-1228 to Arg-1242 the chain is Extracellular. Residues Leu-1243–Leu-1263 traverse the membrane as a helical segment. Topologically, residues Ser-1264–Phe-1333 are cytoplasmic.

It belongs to the patched family. Interacts with RAB11A, MYO5B and RAB11FIP2. Interaction with RAB11A, MYO5B and RAB11FIP2 is required for proper transport to the plasma membrane upon cholesterol depletion. Interacts with NPC2. Interacts with LIMA1. Post-translationally, highly glycosylated. As to expression, expressed in small intestine, stomach and muscle, along with detectable expression in lung, heart, gall bladder, brain, testis, skin and liver. Expression in liver is extremely low.

The protein resides in the apical cell membrane. It is found in the cell membrane. The enzyme catalyses cholesterol(in) = cholesterol(out). It catalyses the reaction sitosterol(out) = sitosterol(in). Its function is as follows. Plays a major role in cholesterol homeostasis. Critical for the uptake of cholesterol across the plasma membrane of the intestinal enterocyte. Involved in plant sterol absorption, it transports sitosterol, although at lower rates than cholesterol. May have a function in the transport of multiple lipids and their homeostasis, thereby influencing lipid metabolism regulation. May be involved in caveolin trafficking from the plasma membrane. Acts as a negative regulator of NPC2 and down-regulates its expression and secretion by inhibiting its maturation and accelerating its degradation. The sequence is that of NPC1-like intracellular cholesterol transporter 1 from Mus musculus (Mouse).